The chain runs to 346 residues: S-adenosylmethionine:tRNA ribosyltransferase-isomerase (346 aa).

Belongs to the QueA family. As to quaternary structure, monomer.

It localises to the cytoplasm. It catalyses the reaction 7-aminomethyl-7-carbaguanosine(34) in tRNA + S-adenosyl-L-methionine = epoxyqueuosine(34) in tRNA + adenine + L-methionine + 2 H(+). The protein operates within tRNA modification; tRNA-queuosine biosynthesis. Transfers and isomerizes the ribose moiety from AdoMet to the 7-aminomethyl group of 7-deazaguanine (preQ1-tRNA) to give epoxyqueuosine (oQ-tRNA). This is S-adenosylmethionine:tRNA ribosyltransferase-isomerase from Nitrosomonas eutropha (strain DSM 101675 / C91 / Nm57).